The chain runs to 363 residues: tRNA/tmRNA (uracil-C(5))-methyltransferase (363 aa).

5 residues coordinate S-adenosyl-L-methionine: Gln187, Tyr215, Asn220, Glu236, and Asp296. The Nucleophile role is filled by Cys321. Glu355 (proton acceptor) is an active-site residue.

Belongs to the class I-like SAM-binding methyltransferase superfamily. RNA M5U methyltransferase family. TrmA subfamily.

It carries out the reaction uridine(54) in tRNA + S-adenosyl-L-methionine = 5-methyluridine(54) in tRNA + S-adenosyl-L-homocysteine + H(+). The catalysed reaction is uridine(341) in tmRNA + S-adenosyl-L-methionine = 5-methyluridine(341) in tmRNA + S-adenosyl-L-homocysteine + H(+). In terms of biological role, dual-specificity methyltransferase that catalyzes the formation of 5-methyluridine at position 54 (m5U54) in all tRNAs, and that of position 341 (m5U341) in tmRNA (transfer-mRNA). This chain is tRNA/tmRNA (uracil-C(5))-methyltransferase, found in Haemophilus influenzae (strain PittEE).